The sequence spans 245 residues: 1-(5-phosphoribosyl)-5-[(5-phosphoribosylamino)methylideneamino] imidazole-4-carboxamide isomerase (245 aa).

Asp8 serves as the catalytic Proton acceptor. The active-site Proton donor is Asp130.

It belongs to the HisA/HisF family.

It localises to the cytoplasm. The enzyme catalyses 1-(5-phospho-beta-D-ribosyl)-5-[(5-phospho-beta-D-ribosylamino)methylideneamino]imidazole-4-carboxamide = 5-[(5-phospho-1-deoxy-D-ribulos-1-ylimino)methylamino]-1-(5-phospho-beta-D-ribosyl)imidazole-4-carboxamide. It functions in the pathway amino-acid biosynthesis; L-histidine biosynthesis; L-histidine from 5-phospho-alpha-D-ribose 1-diphosphate: step 4/9. This Teredinibacter turnerae (strain ATCC 39867 / T7901) protein is 1-(5-phosphoribosyl)-5-[(5-phosphoribosylamino)methylideneamino] imidazole-4-carboxamide isomerase.